Reading from the N-terminus, the 129-residue chain is Succinate dehydrogenase subunit 3-2, mitochondrial (129 aa).

The transit peptide at 1-58 (MEKYQSKARFAPLSDAPFALRGALGSSNSSFNNIDHLRQSSSSGQARSYTSSPLGALR) directs the protein to the mitochondrion. The segment covering 27-53 (SNSSFNNIDHLRQSSSSGQARSYTSSP) has biased composition (polar residues). Residues 27–66 (SNSSFNNIDHLRQSSSSGQARSYTSSPLGALRPKMFPSGN) form a disordered region. His87 contributes to the heme binding site. The chain crosses the membrane as a helical span at residues 105-127 (IFGAALGAVIISIPLATKFSLMF).

As to quaternary structure, component of complex II composed of eight subunits in plants: four classical SDH subunits SDH1, SDH2, SDH3 and SDH4 (a flavoprotein (FP), an iron-sulfur protein (IP), and a cytochrome b composed of a large and a small subunit.), as well as four subunits unknown in mitochondria from bacteria and heterotrophic eukaryotes. It depends on heme as a cofactor.

Its subcellular location is the mitochondrion inner membrane. It participates in carbohydrate metabolism; tricarboxylic acid cycle. Its function is as follows. Membrane-anchoring subunit of succinate dehydrogenase (SDH). The chain is Succinate dehydrogenase subunit 3-2, mitochondrial from Oryza sativa subsp. japonica (Rice).